Consider the following 1464-residue polypeptide: Neuropathy target esterase sws (1464 aa).

The Lumenal portion of the chain corresponds to 1 to 34 (MDVLELLRASATGCYNTIFSEAWHQYVHKQIAAA). The chain crosses the membrane as a helical span at residues 35 to 55 (VYWYGALFLLGVLLFVWFLYF). Over 56–1464 (KRLARLRLRD…GNTTNNDTKN (1409 aa)) the chain is Cytoplasmic. 176–303 (IFGHFEKPIF…IRVIQVIMIR (128 aa)) provides a ligand contact to a nucleoside 3',5'-cyclic phosphate. Disordered regions lie at residues 329–393 (NKNS…LHYH) and 409–438 (QQQQ…SSPT). Residues 338–367 (TGQTTSNVQSQTSQATQSRPSGTTRTPTSP) are compositionally biased toward low complexity. Polar residues predominate over residues 409-420 (QQQQSLNSPRRN). Residue serine 421 is modified to Phosphoserine. The span at 422–438 (TAHVSEAAAASTASSPT) shows a compositional bias: low complexity. A nucleoside 3',5'-cyclic phosphate-binding positions include 456–586 (ELGL…VVRR) and 575–702 (IVLG…LSHR). Residues 928–1094 (LVLGGGGARG…VNNLPGHLWR (167 aa)) enclose the PNPLA domain. A GXGXXG motif is present at residues 932-937 (GGGARG). Positions 959 to 963 (GVSIG) match the GXSXG motif. The active-site Nucleophile is serine 961. The active-site Proton acceptor is aspartate 1081. The DGA/G motif lies at 1081–1083 (DGG). Residue serine 1175 is modified to Phosphoserine. Disordered stretches follow at residues 1352 to 1374 (VDKA…PTPS) and 1400 to 1464 (ATNT…DTKN). Residues 1429–1444 (KRTEQDEHELEHEQVV) are compositionally biased toward basic and acidic residues. Positions 1450–1464 (MDKQQGNTTNNDTKN) are enriched in polar residues.

This sequence belongs to the NTE family. Interacts with Pka-C3; interaction inhibits the catalytic function of Pka-C3 and the esterase activity of sws.

It is found in the endoplasmic reticulum membrane. It carries out the reaction a 1-acyl-sn-glycero-3-phosphocholine + H2O = sn-glycerol 3-phosphocholine + a fatty acid + H(+). Its function is as follows. Phospholipase B that deacylates intracellular phosphatidylcholine (PtdCho), generating glycerophosphocholine (GroPtdCho). This deacylation occurs at both sn-2 and sn-1 positions of PtdCho. Its specific chemical modification by certain organophosphorus (OP) compounds leads to distal axonopathy. Plays a role in the signaling mechanism between neurons and glia that regulates glia wrapping during development of the adult brain. Essential for membrane lipid homeostasis and cell survival in both neurons and glia of the adult brain. The sequence is that of Neuropathy target esterase sws from Drosophila grimshawi (Hawaiian fruit fly).